We begin with the raw amino-acid sequence, 87 residues long: MNSKVFAVLLLLALLTCILSEKYCPTPRNTSCKKMNIKNNCCRDSDCTSNAFCCAEPCGNFCHKASDKPGGRRVDPNASCQTGYVYW.

Residues 1 to 20 (MNSKVFAVLLLLALLTCILS) form the signal peptide. In terms of domain architecture, WAP spans 21–66 (EKYCPTPRNTSCKKMNIKNNCCRDSDCTSNAFCCAEPCGNFCHKAS). Disulfide bonds link Cys-24/Cys-54, Cys-32/Cys-58, Cys-41/Cys-53, Cys-42/Cys-80, and Cys-47/Cys-62.

This sequence belongs to the venom protein 11 family. 01 (wap-1) subfamily. Contains 5 disulfide bonds. Expressed by the venom gland.

The protein localises to the secreted. Its function is as follows. Has antibacterial activity. This chain is U14-lycotoxin-Ls1c, found in Lycosa singoriensis (Wolf spider).